Consider the following 310-residue polypeptide: tRNA-dihydrouridine(16) synthase (310 aa).

FMN is bound by residues 7 to 9 (PMQ) and glutamine 68. The active-site Proton donor is the cysteine 98. FMN contacts are provided by residues lysine 139, 200-202 (NGE), and 224-225 (GR).

This sequence belongs to the Dus family. DusC subfamily. Requires FMN as cofactor.

The enzyme catalyses 5,6-dihydrouridine(16) in tRNA + NADP(+) = uridine(16) in tRNA + NADPH + H(+). It carries out the reaction 5,6-dihydrouridine(16) in tRNA + NAD(+) = uridine(16) in tRNA + NADH + H(+). Catalyzes the synthesis of 5,6-dihydrouridine (D), a modified base found in the D-loop of most tRNAs, via the reduction of the C5-C6 double bond in target uridines. Specifically modifies U16 in tRNAs. The protein is tRNA-dihydrouridine(16) synthase of Haemophilus influenzae (strain ATCC 51907 / DSM 11121 / KW20 / Rd).